The sequence spans 599 residues: Chaperone protein DnaK (599 aa).

At threonine 187 the chain carries Phosphothreonine; by autocatalysis. The disordered stretch occupies residues 575-599 (AQQAATENSKDSDTVEAEIVDDKAN).

This sequence belongs to the heat shock protein 70 family.

In terms of biological role, acts as a chaperone. The sequence is that of Chaperone protein DnaK from Mycoplasmopsis pulmonis (strain UAB CTIP) (Mycoplasma pulmonis).